Consider the following 87-residue polypeptide: Translation initiation factor IF-1 2 (87 aa).

The 72-residue stretch at 1–72 folds into the S1-like domain; the sequence is MAKEELLELD…TKGRINFRHK (72 aa). A disordered region spans residues 68–87; sequence NFRHKDANSPRPPRSGQPRR. Residues 77 to 87 show a composition bias toward pro residues; that stretch reads PRPPRSGQPRR.

This sequence belongs to the IF-1 family. Component of the 30S ribosomal translation pre-initiation complex which assembles on the 30S ribosome in the order IF-2 and IF-3, IF-1 and N-formylmethionyl-tRNA(fMet); mRNA recruitment can occur at any time during PIC assembly.

The protein localises to the cytoplasm. Functionally, one of the essential components for the initiation of protein synthesis. Stabilizes the binding of IF-2 and IF-3 on the 30S subunit to which N-formylmethionyl-tRNA(fMet) subsequently binds. Helps modulate mRNA selection, yielding the 30S pre-initiation complex (PIC). Upon addition of the 50S ribosomal subunit IF-1, IF-2 and IF-3 are released leaving the mature 70S translation initiation complex. The chain is Translation initiation factor IF-1 2 from Burkholderia cenocepacia (strain HI2424).